Here is a 305-residue protein sequence, read N- to C-terminus: Glycine--tRNA ligase alpha subunit (305 aa).

It belongs to the class-II aminoacyl-tRNA synthetase family. In terms of assembly, tetramer of two alpha and two beta subunits.

It localises to the cytoplasm. The enzyme catalyses tRNA(Gly) + glycine + ATP = glycyl-tRNA(Gly) + AMP + diphosphate. In Streptococcus pneumoniae (strain ATCC BAA-255 / R6), this protein is Glycine--tRNA ligase alpha subunit.